The sequence spans 321 residues: Transcription factor ATOH8 (321 aa).

Disordered stretches follow at residues 59 to 193 (GLRD…SSYS) and 203 to 222 (HQDSSASPRKRPGEATAASS). Over residues 70 to 85 (VPVPVPVPVPVAPAVP) the composition is skewed to pro residues. Positions 93-109 (AGERGGSRAPEVSDARK) are enriched in basic and acidic residues. The segment covering 121-132 (LPTPPPPPPPAP) has biased composition (pro residues). Positions 133 to 143 (QSQAPGGPEAQ) are enriched in low complexity. Over residues 160-186 (PARPAPSAPPAPPAPPESTVRPAPPTR) the composition is skewed to pro residues. Residues 230-243 (TRRLLANARERTRV) form a basic motif; degenerate region. Residues 230–282 (TRRLLANARERTRVHTISAAFEALRKQVPCYSYGQKLSKLAILRIACNYILSL) enclose the bHLH domain. The helix-loop-helix motif stretch occupies residues 244 to 282 (HTISAAFEALRKQVPCYSYGQKLSKLAILRIACNYILSL).

Efficient DNA binding requires dimerization with another bHLH protein. Interacts with NEUROG3 and NEUROD1. Interacts with ZFPM2; mediates indirect interaction with GATA4. Forms a heterodimer with TCF3; repress transcription of TCF3 and TCF3/NEUROG3 dimer-induced transactivation of E box-dependent promoters. In terms of tissue distribution, expressed in lung, liver, kidney, heart and pancreas. Expressed in endothel of umbilical vessels.

The protein localises to the nucleus. It localises to the nucleus speckle. It is found in the cytoplasm. Functionally, transcription factor that binds a palindromic (canonical) core consensus DNA sequence 5'-CANNTG- 3' known as an E-box element, possibly as a heterodimer with other bHLH proteins. Regulates endothelial cell proliferation, migration and tube-like structures formation. Modulates endothelial cell differentiation through NOS3. May be implicated in specification and differentiation of neuronal cell lineages in the brain. May participate in kidney development and may be involved in podocyte differentiation. During early embryonic development is involved in tissue-specific differentiation processes that are dependent on class II bHLH factors and namely modulates the differentiation program initiated by the pro-endocrine factor NEUROG3. During myogenesis, may play a role during the transition of myoblasts from the proliferative phase to the differentiation phase. Positively regulates HAMP transcription in two ways, firstly by acting directly on the HAMP promoter via E-boxes binding and indirectly through increased phosphorylation of SMAD protein complex. Repress NEUROG3-dependent gene activation in a gene-specific manner through at least two mechanisms; requires only either the sequestering of a general partner such as TCF3 through heterodimerization, either also requires binding of the bHLH domain to DNA via a basic motif. The chain is Transcription factor ATOH8 from Homo sapiens (Human).